The following is a 171-amino-acid chain: Large ribosomal subunit protein bL21 (171 aa).

Residues 144-171 are disordered; it reads AAPAKAEAAPKKKAAPKKAAAKTEEGEA. A compositionally biased stretch (basic residues) spans 154-163; that stretch reads KKKAAPKKAA.

Belongs to the bacterial ribosomal protein bL21 family. As to quaternary structure, part of the 50S ribosomal subunit. Contacts protein L20.

Functionally, this protein binds to 23S rRNA in the presence of protein L20. The protein is Large ribosomal subunit protein bL21 of Caulobacter vibrioides (strain ATCC 19089 / CIP 103742 / CB 15) (Caulobacter crescentus).